A 715-amino-acid polypeptide reads, in one-letter code: Metastasis-associated protein MTA1 (715 aa).

The 164-residue stretch at 1-164 (MAANMYRVGD…PQQKTLLADK (164 aa)) folds into the BAH domain. Residues 165–276 (GEIRVGNRYQ…KAISALVPQG (112 aa)) form the ELM2 domain. Lys-182 participates in a covalent cross-link: Glycyl lysine isopeptide (Lys-Gly) (interchain with G-Cter in ubiquitin). One can recognise an SANT domain in the interval 283–335 (DEMEEWSASEANLFEEALEKYGKDFTDIQQDFLPWKSLTSIIEYYYMWKTTDR). Ser-386 is subject to Phosphoserine. The GATA-type; atypical zinc finger occupies 393–420 (CESCYTTQSYQWYSWGPPNMQCRLCASC). Residues 437-460 (DGERPGPNRNNMSPHGIPARSSGS) form a disordered region. Ser-449 bears the Phosphoserine mark. Lys-509 participates in a covalent cross-link: Glycyl lysine isopeptide (Lys-Gly) (interchain with G-Cter in SUMO2 and SUMO3). Ser-522 bears the Phosphoserine mark. Positions 542–552 (ETHPRPPKPDP) are enriched in basic and acidic residues. The tract at residues 542–590 (ETHPRPPKPDPVKSSSSVLSSLTPAKSAPVINNGSPTILGKRSYEQHNG) is disordered. The short motif at 545–552 (PRPPKPDP) is the SH3-binding element. Lys-549 participates in a covalent cross-link: Glycyl lysine isopeptide (Lys-Gly) (interchain with G-Cter in SUMO2). A compositionally biased stretch (low complexity) spans 553 to 565 (VKSSSSVLSSLTP). Thr-564 is subject to Phosphothreonine. Residue Ser-576 is modified to Phosphoserine. Thr-578 carries the phosphothreonine modification. Lys-626 carries the N6-acetyllysine; alternate modification. Lys-626 participates in a covalent cross-link: Glycyl lysine isopeptide (Lys-Gly) (interchain with G-Cter in ubiquitin); alternate. Residue Ser-639 is modified to Phosphoserine. Residues 656 to 686 (DVFYMATEETRKIRKLLSSSETKRAARRPYK) form an interaction with RBBP4 region. Positions 673–715 (SSSETKRAARRPYKPIALRQSQALPLRPPPPAPVNDEPIVIED) are disordered. Residues 696 to 705 (LPLRPPPPAP) carry the SH3-binding motif. Positions 711–715 (IVIED) match the SUMO interaction motif 1 (SIM); crucial for efficient sumoylation motif.

The protein belongs to the metastasis-associated protein family. Component of the nucleosome remodeling and deacetylase (NuRD) repressor complex, composed of core proteins MTA1, MTA2, MTA3, RBBP4, RBBP7, HDAC1, HDAC2, MBD2, MBD3, and peripherally associated proteins CDK2AP1, CDK2AP2, GATAD2A, GATAD2B, CHD3, CHD4 and CHD5. The exact stoichiometry of the NuRD complex is unknown, and some subunits such as MBD2 and MBD3, GATAD2A and GATAD2B, and CHD3, CHD4 and CHD5 define mutually exclusive NuRD complexes. Interacts with RBBP4; the interaction is direct. Interacts with BMAL1. Interacts with CLOCK. Interacts with COP1. Interacts with CSNK1G2 in the cytoplasm. Interacts with EP300. Interacts with HDAC2. Interacts with ITGB3BP/CENPR. Interacts with MBD3L2. Interacts with MDM2. Interacts with NACC2. Interacts with p53/TP53. Interacts with PIAS1. Interacts with PIAS3. Interacts with PIAS4. Interacts with PWWP2A. Interacts with PWWP2B. Interacts with SENP1. Interacts with SENP2. Interacts with SIX3; facilitates the binding of SIX3 to the core DNA motif of SIX3 promoter. Interacts with SUMO1. Interacts with SUMO2. Interacts with TFCP2L1; which is indispensable for TFCP2L1-mediated self-renewal-promoting effect and endoderm-inhibiting action. Interacts with TFAP2C. Interacts with TPR. Interacts with UBE2I/UBC9. Post-translationally, phosphorylation by CSNK1G2/CK1 triggered by estrogen enhances corepression of estrogen receptor (ER). In terms of processing, acetylation is essential for its transcriptional coactivator activity. Sumoylation positively regulates its transcriptional corepressor activity but does not affect the protein stability. Sumoylated preferentially by SUMO2 or SUMO3 than SUMO1. Sumoylation is enhanced by PIAS1/3/4 and preferentially sumoylated by SUMO2 in the presence of PIAS1/3/4. Desumoylated by SENP1. Post-translationally, ubiquitinated by COP1, which leads to proteasomal degradation. As to expression, widely expressed but not in skeletal muscle. Highly expressed in the brain, liver, kidney and cardiac muscle and in mammary tumors.

The protein resides in the nucleus. Its subcellular location is the nucleus envelope. It is found in the cytoplasm. The protein localises to the cytoskeleton. In terms of biological role, transcriptional coregulator which can act as both a transcriptional corepressor and coactivator. Acts as a component of the histone deacetylase NuRD complex which participates in the remodeling of chromatin. In the NuRD complex, regulates transcription of its targets by modifying the acetylation status of the target chromatin and cofactor accessibility to the target DNA. In conjunction with other components of NuRD, acts as a transcriptional corepressor of BRCA1, ESR1, TFF1 and CDKN1A. Acts as a transcriptional coactivator of BCAS3, PAX5 and SUMO2, independent of the NuRD complex. Stimulates the expression of WNT1 by inhibiting the expression of its transcriptional corepressor SIX3. Regulates p53-dependent and -independent DNA repair processes following genotoxic stress. Regulates the stability and function of p53/TP53 by inhibiting its ubiquitination by COP1 and MDM2 thereby regulating the p53-dependent DNA repair. Plays a role in the regulation of the circadian clock and is essential for the generation and maintenance of circadian rhythms under constant light and for normal entrainment of behavior to light-dark (LD) cycles. Positively regulates the CLOCK-BMAL1 heterodimer mediated transcriptional activation of its own transcription and the transcription of CRY1. Regulates deacetylation of BMAL1 by regulating SIRT1 expression, resulting in derepressing CRY1-mediated transcription repression. With Tfcp2l1, promotes establishment and maintenance of pluripotency in embryonic stem cells (ESCs) and inhibits endoderm differentiation. This chain is Metastasis-associated protein MTA1 (Mta1), found in Mus musculus (Mouse).